Here is a 117-residue protein sequence, read N- to C-terminus: NADH-ubiquinone oxidoreductase chain 3 (117 aa).

Helical transmembrane passes span 1 to 21 (MKFI…LLLL), 58 to 78 (FLMT…LPII), and 86 to 106 (TMIS…TLIL).

Belongs to the complex I subunit 3 family.

It localises to the mitochondrion membrane. It carries out the reaction a ubiquinone + NADH + 5 H(+)(in) = a ubiquinol + NAD(+) + 4 H(+)(out). In terms of biological role, core subunit of the mitochondrial membrane respiratory chain NADH dehydrogenase (Complex I) that is believed to belong to the minimal assembly required for catalysis. Complex I functions in the transfer of electrons from NADH to the respiratory chain. The immediate electron acceptor for the enzyme is believed to be ubiquinone. The polypeptide is NADH-ubiquinone oxidoreductase chain 3 (ND3) (Apis mellifera ligustica (Common honeybee)).